The chain runs to 210 residues: Guanylate kinase (210 aa).

Residues 6–186 (GLLGIISAPS…ALIYLQSVIL (181 aa)) enclose the Guanylate kinase-like domain. 13–20 (APSGAGKS) is a binding site for ATP.

This sequence belongs to the guanylate kinase family.

Its subcellular location is the cytoplasm. It catalyses the reaction GMP + ATP = GDP + ADP. Functionally, essential for recycling GMP and indirectly, cGMP. In Blochmanniella floridana, this protein is Guanylate kinase.